Consider the following 568-residue polypeptide: 3-(3-hydroxy-phenyl)propionate/3-hydroxycinnamic acid hydroxylase (568 aa).

Residues 13 to 42 (DVVI…IVEE) and 278 to 288 (FRKGRMFLAGD) each bind FAD.

Belongs to the PheA/TfdB FAD monooxygenase family. FAD is required as a cofactor.

It catalyses the reaction 3-(3-hydroxyphenyl)propanoate + NADH + O2 + H(+) = 3-(2,3-dihydroxyphenyl)propanoate + NAD(+) + H2O. The enzyme catalyses (2E)-3-(3-hydroxyphenyl)prop-2-enoate + NADH + O2 + H(+) = (2E)-3-(2,3-dihydroxyphenyl)prop-2-enoate + NAD(+) + H2O. The protein operates within aromatic compound metabolism; 3-phenylpropanoate degradation. Catalyzes the insertion of one atom of molecular oxygen into position 2 of the phenyl ring of 3-(3-hydroxyphenyl)propionate (3-HPP) and hydroxycinnamic acid (3HCI). This Mycobacterium sp. (strain JLS) protein is 3-(3-hydroxy-phenyl)propionate/3-hydroxycinnamic acid hydroxylase.